A 220-amino-acid polypeptide reads, in one-letter code: Probable chemoreceptor glutamine deamidase CheD 2 (220 aa).

It belongs to the CheD family.

It catalyses the reaction L-glutaminyl-[protein] + H2O = L-glutamyl-[protein] + NH4(+). In terms of biological role, probably deamidates glutamine residues to glutamate on methyl-accepting chemotaxis receptors (MCPs), playing an important role in chemotaxis. The protein is Probable chemoreceptor glutamine deamidase CheD 2 of Methanosarcina acetivorans (strain ATCC 35395 / DSM 2834 / JCM 12185 / C2A).